Here is a 312-residue protein sequence, read N- to C-terminus: Ribosomal protein L11 methyltransferase (312 aa).

Thr-162, Gly-183, Asp-205, and Asn-248 together coordinate S-adenosyl-L-methionine.

It belongs to the methyltransferase superfamily. PrmA family.

Its subcellular location is the cytoplasm. The catalysed reaction is L-lysyl-[protein] + 3 S-adenosyl-L-methionine = N(6),N(6),N(6)-trimethyl-L-lysyl-[protein] + 3 S-adenosyl-L-homocysteine + 3 H(+). In terms of biological role, methylates ribosomal protein L11. This is Ribosomal protein L11 methyltransferase from Bacillus cereus (strain G9842).